The primary structure comprises 312 residues: tRNA dimethylallyltransferase (312 aa).

An ATP-binding site is contributed by 18 to 25; the sequence is GPTASGKS. 20–25 contacts substrate; the sequence is TASGKS. 2 interaction with substrate tRNA regions span residues 43 to 46 and 167 to 171; these read DSMQ and QRILR.

The protein belongs to the IPP transferase family. In terms of assembly, monomer. Requires Mg(2+) as cofactor.

The catalysed reaction is adenosine(37) in tRNA + dimethylallyl diphosphate = N(6)-dimethylallyladenosine(37) in tRNA + diphosphate. Functionally, catalyzes the transfer of a dimethylallyl group onto the adenine at position 37 in tRNAs that read codons beginning with uridine, leading to the formation of N6-(dimethylallyl)adenosine (i(6)A). In Azorhizobium caulinodans (strain ATCC 43989 / DSM 5975 / JCM 20966 / LMG 6465 / NBRC 14845 / NCIMB 13405 / ORS 571), this protein is tRNA dimethylallyltransferase.